The following is a 379-amino-acid chain: GDSL esterase/lipase At3g05180 (379 aa).

The first 27 residues, Met1–Ser27, serve as a signal peptide directing secretion. The active-site Nucleophile is the Ser43. Asn294 and Asn330 each carry an N-linked (GlcNAc...) asparagine glycan. Catalysis depends on residues Asp349 and His352.

It belongs to the 'GDSL' lipolytic enzyme family.

The protein resides in the secreted. The polypeptide is GDSL esterase/lipase At3g05180 (Arabidopsis thaliana (Mouse-ear cress)).